We begin with the raw amino-acid sequence, 496 residues long: DNA-directed DNA/RNA polymerase mu (496 aa).

The interval 1–22 (MLPKRRRVRAGSPHSAVASSTP) is disordered. S12 is subject to Phosphoserine. A compositionally biased stretch (low complexity) spans 12 to 22 (SPHSAVASSTP). The BRCT domain occupies 23 to 122 (PSVVRFPDVA…QPVPEEGRHH (100 aa)). Na(+) contacts are provided by T241 and V243. Residues 323 to 332 (RGKLQGHDVD) are involved in ssDNA binding. 3 residues coordinate Mg(2+): D330, D332, and D420.

This sequence belongs to the DNA polymerase type-X family. The cofactor is Mg(2+).

It is found in the nucleus. It carries out the reaction DNA(n) + a 2'-deoxyribonucleoside 5'-triphosphate = DNA(n+1) + diphosphate. Gap-filling polymerase involved in repair of DNA double-strand breaks by non-homologous end joining (NHEJ). Participates in immunoglobulin (Ig) light chain gene rearrangement in V(D)J recombination. This chain is DNA-directed DNA/RNA polymerase mu (Polm), found in Mus musculus (Mouse).